The chain runs to 234 residues: Opacity protein V28 (234 aa).

Residue A1 is a signal peptide.

This sequence belongs to the opacity porin family.

The protein localises to the cell outer membrane. In terms of biological role, implicated in a number of adherence functions. OPA proteins are implicated in pathogenesis and are subject to phase variation. This chain is Opacity protein V28, found in Neisseria gonorrhoeae.